A 113-amino-acid polypeptide reads, in one-letter code: Gigasin-5 (113 aa).

As to expression, component of the organic matrix of calcified shell layers.

The sequence is that of Gigasin-5 from Magallana gigas (Pacific oyster).